Reading from the N-terminus, the 209-residue chain is Tektin bundle-interacting protein 1 (209 aa).

In terms of assembly, microtubule inner protein component of sperm flagellar doublet microtubules.

The protein resides in the cytoplasm. It localises to the cytoskeleton. It is found in the cilium axoneme. The protein localises to the flagellum axoneme. Functionally, microtubule inner protein (MIP) part of the dynein-decorated doublet microtubules (DMTs) in cilia axoneme, which is required for motile cilia beating. Located at the center of the tektin bundle where may function to recruit tektins or stabilize the bundle. This chain is Tektin bundle-interacting protein 1, found in Homo sapiens (Human).